A 131-amino-acid polypeptide reads, in one-letter code: UPF0102 protein RALTA_A3032 (131 aa).

The span at 1–12 (MMRSFKSTQEPS) shows a compositional bias: polar residues. The interval 1–21 (MMRSFKSTQEPSRQARGAQAE) is disordered.

It belongs to the UPF0102 family.

The sequence is that of UPF0102 protein RALTA_A3032 from Cupriavidus taiwanensis (strain DSM 17343 / BCRC 17206 / CCUG 44338 / CIP 107171 / LMG 19424 / R1) (Ralstonia taiwanensis (strain LMG 19424)).